Here is a 447-residue protein sequence, read N- to C-terminus: Dual specificity protein phosphatase CDC14C (447 aa).

Positions 14 to 168 (PQDDVYVDIT…AMQYGFLNFN (155 aa)) are a. A linker region spans residues 169 to 182 (SFNLDEYEHYEKAE). The b stretch occupies residues 183–349 (NGDLNWIIPD…EGDYFRQRLK (167 aa)). Residues 184–344 (GDLNWIIPDR…TSLWLEGDYF (161 aa)) form the Tyrosine-protein phosphatase domain. The Phosphocysteine intermediate role is filled by Cys284. The helical transmembrane segment at 426-446 (FTLCSVVIWWIVCDYILPILL) threads the bilayer.

It belongs to the protein-tyrosine phosphatase family. Non-receptor class CDC14 subfamily.

Its subcellular location is the endoplasmic reticulum membrane. The catalysed reaction is O-phospho-L-tyrosyl-[protein] + H2O = L-tyrosyl-[protein] + phosphate. It catalyses the reaction O-phospho-L-seryl-[protein] + H2O = L-seryl-[protein] + phosphate. The enzyme catalyses O-phospho-L-threonyl-[protein] + H2O = L-threonyl-[protein] + phosphate. In terms of biological role, dual-specificity phosphatase. Preferentially dephosphorylates proteins modified by proline-directed kinases. This Homo sapiens (Human) protein is Dual specificity protein phosphatase CDC14C.